A 584-amino-acid chain; its full sequence is UBX domain-containing protein 2 (584 aa).

The Cytoplasmic portion of the chain corresponds to 1 to 80; it reads MPVVNHEDSE…PTQTSTPMAE (80 aa). A helical transmembrane segment spans residues 81–101; that stretch reads TLVPPALGPRPLLFTASLPVV. At 102–151 the chain is on the lumenal side; sequence RPLPANFRNDFRTIGLNGRSNTVWSMFESFSYDGNPFLFILLLIPRIINR. The helical transmembrane segment at 152–172 threads the bilayer; it reads LSATIFTFFCTLLSLHSISGG. At 173-584 the chain is on the cytoplasmic side; that stretch reads GNSGKPKISK…DEEDEENEEQ (412 aa). Residues 426-570 form the UBX domain; that stretch reads ETTGKQATLQ…WPNGSLLVEA (145 aa).

As to quaternary structure, component of the DOA10 ubiquitin ligase complex which contains E3 ligase SSM4/DOA10 and CDC48-binding protein UBX2/SEL1. Component of the HRD1 ubiquitin ligase complex which contains the E3 ligase HRD1, its cofactors HRD3, USA1 and DER1, substrate recruiting factor YOS9 and UBX2. In ERAD-L, HRD3 and YOS9 jointly bind misfolded glycoproteins in the endoplasmic reticulum (ER) lumen. Movement of ERAD-L substrates through the ER membrane is facilitated by HRD1 and DER1 which have lateral gates facing each other and which distort the membrane region between the lateral gates, making it much thinner than a normal phospholipid bilayer. Substrates insert into the membrane as a hairpin loop with one strand interacting with DER1 and the other with HRD1. Both the DOA10 and HRD1 ubiquitin ligase complexes interact with the heterotrimeric CDC48-NPL4-UFD1 ATPase complex which is recruited by UBX2 via its interaction with CDC48 and which moves ubiquitinated substrates to the cytosol for targeting to the proteasome.

The protein localises to the endoplasmic reticulum membrane. Functionally, integral endoplasmic reticulum membrane protein that coordinates the assembly of the ER-associated protein degradation (ERAD) machinery at the ER membrane. Mediates binding of CDC48 to the E3 ubiquitin ligases SSM4/DOA10 and HRD1, and to ERAD substrates. Component of the DOA10 ubiquitin ligase complex, which is part of the ERAD-C pathway responsible for the rapid degradation of membrane proteins with misfolded cytoplasmic domains. ERAD-C substrates are ubiquitinated through DOA10 in conjunction with the E2 ubiquitin-conjugating enzymes UBC6 and UBC7-CUE1. Also a component of the HRD1 ubiquitin ligase complex, which is part of the ERAD-L and ERAD-M pathways responsible for the rapid degradation of soluble lumenal and membrane proteins with misfolded lumenal domains (ERAD-L), or ER-membrane proteins with misfolded transmembrane domains (ERAD-M). ERAD-L substrates are ubiquitinated through HRD1 in conjunction with the E2 ubiquitin-conjugating enzymes UBC1 and UBC7-CUE1. Ubiquitinated substrates are then removed to the cytosol via the action of the CDC48-NPL4-UFD1 ATPase complex and targeted to the proteasome. This Saccharomyces cerevisiae (strain ATCC 204508 / S288c) (Baker's yeast) protein is UBX domain-containing protein 2 (UBX2).